The following is a 512-amino-acid chain: MARAVHRSGLVALGIATALMASCAFAAKDVVVAVGSNFTTLDPYDANDTLSQAVAKSFYQGLFGLDKEMKLKNVLAESYTVSDDGITYTVKLREGIKFQDGTDFNAAAVKANLDRASDPANHLKRYNLYKNIAKTEAIDPTTVKITLKQPFSAFINILVHPATAMISPAALEKYGKEIGFHPVGTGPYELDTWNQTDFVKVKKFAGYWQPGLPKLDSITWRPVADNNTRAAMLQTGEAQFAFPIPYEQAALLEKNKNIELMASPSIMQRYISMNVTQKPFDNPKVREALNYAINRPALVKVAFAGYATPATGVVPPSIAYAQSYKPWPYDPVKARELLKEAGYPNGFSTTLWSSHNHSTAQKVLQFTQQQLAQVGIKAQVTAMDAGQRAAEVEGKGQKESGVRMFYTGWSASTGEADWALSPLFASQNWPPTLFNTAFYSNKQVDDFLAQALKTNDPAEKTRLYKAAQDIIWQESPWIPLVVEKLVSAHSKNLTGFWIMPDTGFSFEDADLQ.

The first 26 residues, methionine 1 to alanine 26, serve as a signal peptide directing secretion.

The protein belongs to the bacterial solute-binding protein 5 family. In terms of assembly, the complex is composed of two ATP-binding proteins (GsiA), two transmembrane proteins (GsiC and GsiD) and a solute-binding protein (GsiB).

Its subcellular location is the periplasm. Its function is as follows. Part of the ABC transporter complex GsiABCD involved in glutathione import. Binds glutathione. The polypeptide is Glutathione-binding protein GsiB (Shigella boydii serotype 4 (strain Sb227)).